Here is a 536-residue protein sequence, read N- to C-terminus: Phosphoenolpyruvate carboxykinase (ATP) (536 aa).

Substrate contacts are provided by Arg61, Tyr195, and Lys201. ATP contacts are provided by residues Lys201, His220, and 236 to 244 (GLSGTGKTT). The Mn(2+) site is built by Lys201 and His220. Asp257 is a binding site for Mn(2+). 3 residues coordinate ATP: Glu285, Arg322, and Thr447. Residue Arg322 coordinates substrate.

The protein belongs to the phosphoenolpyruvate carboxykinase (ATP) family. The cofactor is Mn(2+).

It localises to the cytoplasm. The enzyme catalyses oxaloacetate + ATP = phosphoenolpyruvate + ADP + CO2. It functions in the pathway carbohydrate biosynthesis; gluconeogenesis. Functionally, involved in the gluconeogenesis. Catalyzes the conversion of oxaloacetate (OAA) to phosphoenolpyruvate (PEP) through direct phosphoryl transfer between the nucleoside triphosphate and OAA. This Agrobacterium fabrum (strain C58 / ATCC 33970) (Agrobacterium tumefaciens (strain C58)) protein is Phosphoenolpyruvate carboxykinase (ATP).